The primary structure comprises 796 residues: Protein translocase subunit SecA 2 (796 aa).

Residues Gln84, 102 to 106 (GEGKT), and Asp496 contribute to the ATP site.

Belongs to the SecA family. As to quaternary structure, monomer and homodimer. Part of the essential Sec protein translocation apparatus which comprises SecA, SecYEG and auxiliary proteins SecDF. Other proteins may also be involved.

The protein localises to the cell membrane. Its subcellular location is the cytoplasm. It carries out the reaction ATP + H2O + cellular proteinSide 1 = ADP + phosphate + cellular proteinSide 2.. Functionally, part of the Sec protein translocase complex. Interacts with the SecYEG preprotein conducting channel. Has a central role in coupling the hydrolysis of ATP to the transfer of proteins into and across the cell membrane, serving as an ATP-driven molecular motor driving the stepwise translocation of polypeptide chains across the membrane. The polypeptide is Protein translocase subunit SecA 2 (Staphylococcus haemolyticus (strain JCSC1435)).